A 152-amino-acid polypeptide reads, in one-letter code: Transcriptional repressor NrdR (152 aa).

A zinc finger lies at Cys3–Cys34. One can recognise an ATP-cone domain in the interval Leu49–Arg139.

Belongs to the NrdR family. The cofactor is Zn(2+).

Negatively regulates transcription of bacterial ribonucleotide reductase nrd genes and operons by binding to NrdR-boxes. This is Transcriptional repressor NrdR from Heliobacterium modesticaldum (strain ATCC 51547 / Ice1).